A 378-amino-acid chain; its full sequence is Cytochrome b (378 aa).

The next 4 helical transmembrane spans lie at 34–54 (FGSL…FLAM), 78–99 (WFLR…FIHV), 114–134 (WMIG…GYVL), and 179–199 (FFTF…IHLL). 2 residues coordinate heme b: His-84 and His-98. Residues His-183 and His-197 each coordinate heme b. Position 202 (His-202) interacts with a ubiquinone. Helical transmembrane passes span 227–247 (YKDI…IWKF), 289–309 (LGGV…PFTH), 321–341 (LNQI…WIGA), and 348–368 (YVLT…INPL).

It belongs to the cytochrome b family. As to quaternary structure, the main subunits of complex b-c1 are: cytochrome b, cytochrome c1 and the Rieske protein. Heme b serves as cofactor.

The protein resides in the mitochondrion inner membrane. Its function is as follows. Component of the ubiquinol-cytochrome c reductase complex (complex III or cytochrome b-c1 complex) that is part of the mitochondrial respiratory chain. The b-c1 complex mediates electron transfer from ubiquinol to cytochrome c. Contributes to the generation of a proton gradient across the mitochondrial membrane that is then used for ATP synthesis. The sequence is that of Cytochrome b from Aedes aegypti (Yellowfever mosquito).